The primary structure comprises 348 residues: Anthranilate phosphoribosyltransferase (348 aa).

5-phospho-alpha-D-ribose 1-diphosphate contacts are provided by residues Gly89, 92-93 (GD), Thr97, 99-102 (NIST), 117-125 (KHGNRSVSS), and Ser129. Gly89 is an anthranilate binding site. Mg(2+) is bound at residue Ser101. Residue Asn120 coordinates anthranilate. Residue Arg175 coordinates anthranilate. Asp233 and Glu234 together coordinate Mg(2+).

Belongs to the anthranilate phosphoribosyltransferase family. As to quaternary structure, homodimer. It depends on Mg(2+) as a cofactor.

The catalysed reaction is N-(5-phospho-beta-D-ribosyl)anthranilate + diphosphate = 5-phospho-alpha-D-ribose 1-diphosphate + anthranilate. It participates in amino-acid biosynthesis; L-tryptophan biosynthesis; L-tryptophan from chorismate: step 2/5. In terms of biological role, catalyzes the transfer of the phosphoribosyl group of 5-phosphorylribose-1-pyrophosphate (PRPP) to anthranilate to yield N-(5'-phosphoribosyl)-anthranilate (PRA). This chain is Anthranilate phosphoribosyltransferase, found in Shewanella sp. (strain W3-18-1).